A 364-amino-acid chain; its full sequence is tRNA 2-selenouridine synthase (364 aa).

Residues phenylalanine 15–aspartate 138 form the Rhodanese domain. Catalysis depends on cysteine 98, which acts as the S-selanylcysteine intermediate.

This sequence belongs to the SelU family. Monomer.

It carries out the reaction 5-methylaminomethyl-2-thiouridine(34) in tRNA + selenophosphate + (2E)-geranyl diphosphate + H2O + H(+) = 5-methylaminomethyl-2-selenouridine(34) in tRNA + (2E)-thiogeraniol + phosphate + diphosphate. The catalysed reaction is 5-methylaminomethyl-2-thiouridine(34) in tRNA + (2E)-geranyl diphosphate = 5-methylaminomethyl-S-(2E)-geranyl-thiouridine(34) in tRNA + diphosphate. It catalyses the reaction 5-methylaminomethyl-S-(2E)-geranyl-thiouridine(34) in tRNA + selenophosphate + H(+) = 5-methylaminomethyl-2-(Se-phospho)selenouridine(34) in tRNA + (2E)-thiogeraniol. The enzyme catalyses 5-methylaminomethyl-2-(Se-phospho)selenouridine(34) in tRNA + H2O = 5-methylaminomethyl-2-selenouridine(34) in tRNA + phosphate. Its function is as follows. Involved in the post-transcriptional modification of the uridine at the wobble position (U34) of tRNA(Lys), tRNA(Glu) and tRNA(Gln). Catalyzes the conversion of 2-thiouridine (S2U-RNA) to 2-selenouridine (Se2U-RNA). Acts in a two-step process involving geranylation of 2-thiouridine (S2U) to S-geranyl-2-thiouridine (geS2U) and subsequent selenation of the latter derivative to 2-selenouridine (Se2U) in the tRNA chain. The chain is tRNA 2-selenouridine synthase from Photobacterium profundum (strain SS9).